Reading from the N-terminus, the 299-residue chain is Glycine--tRNA ligase alpha subunit (299 aa).

The protein belongs to the class-II aminoacyl-tRNA synthetase family. Tetramer of two alpha and two beta subunits.

Its subcellular location is the cytoplasm. It catalyses the reaction tRNA(Gly) + glycine + ATP = glycyl-tRNA(Gly) + AMP + diphosphate. This chain is Glycine--tRNA ligase alpha subunit, found in Lactiplantibacillus plantarum (strain ATCC BAA-793 / NCIMB 8826 / WCFS1) (Lactobacillus plantarum).